A 235-amino-acid chain; its full sequence is U1 small nuclear ribonucleoprotein C (235 aa).

The Matrin-type zinc-finger motif lies at 4–36; sequence YYCEYCDIYLTHSSPVGRRQHIHGRKHISAKIE. The tract at residues 131–235 is disordered; the sequence is QAHNNYSYPN…SKEHIESDIS (105 aa). Positions 134–168 are enriched in low complexity; the sequence is NNYSYPNSINPSNQINYSNNYGSNNFNNSNEFNKN. The segment covering 169 to 189 has biased composition (basic and acidic residues); sequence MNEKDNINNNDIHDNKVKTDE. Residues 192 to 203 are compositionally biased toward low complexity; sequence PINNDNLNNTRN. Composition is skewed to basic and acidic residues over residues 205–217 and 225–235; these read SYEE…DHKK and NSKEHIESDIS.

The protein belongs to the U1 small nuclear ribonucleoprotein C family. In terms of assembly, U1 snRNP is composed of the 7 core Sm proteins B/B', D1, D2, D3, E, F and G that assemble in a heptameric protein ring on the Sm site of the small nuclear RNA to form the core snRNP, and at least 3 U1 snRNP-specific proteins U1-70K, U1-A and U1-C. U1-C interacts with U1 snRNA and the 5' splice-site region of the pre-mRNA.

It localises to the nucleus. In terms of biological role, component of the spliceosomal U1 snRNP, which is essential for recognition of the pre-mRNA 5' splice-site and the subsequent assembly of the spliceosome. U1-C is directly involved in initial 5' splice-site recognition for both constitutive and regulated alternative splicing. The interaction with the 5' splice-site seems to precede base-pairing between the pre-mRNA and the U1 snRNA. Stimulates commitment or early (E) complex formation by stabilizing the base pairing of the 5' end of the U1 snRNA and the 5' splice-site region. The protein is U1 small nuclear ribonucleoprotein C of Plasmodium falciparum (isolate 3D7).